The primary structure comprises 474 residues: PRAME family member 2 (474 aa).

The LRR 1; degenerate repeat unit spans residues 97-124 (RWKLQVLDLRDVDENFWARWPGAWALSC). An LRR 2; degenerate repeat occupies 179-203 (HLCCSKLVNYLTPIKYLRKSLKIIY). One copy of the LRR 3; degenerate repeat lies at 204–230 (INSIGELEIHNTCWPHLIRKLYCYLKE). An LRR 4; degenerate repeat occupies 231 to 265 (MKTLCKLVFSRCHHYTSDNELEGWLVTRFTSVFLR). 5 LRR repeats span residues 266-291 (LEHL…IRCL), 292-323 (QNPL…GYLK), 324-342 (HLNL…PLGA), 348-375 (AASL…GLSC), and 376-400 (CSQL…LLRH).

It belongs to the PRAME family.

This Homo sapiens (Human) protein is PRAME family member 2.